The chain runs to 104 residues: Translation initiation factor 1A (104 aa).

Low complexity predominate over residues Met1–Val14. Positions Met1–Asn20 are disordered. Residues Thr12–Thr87 form the S1-like domain.

The protein belongs to the eIF-1A family.

Its function is as follows. Seems to be required for maximal rate of protein biosynthesis. Enhances ribosome dissociation into subunits and stabilizes the binding of the initiator Met-tRNA(I) to 40 S ribosomal subunits. This Methanococcus maripaludis (strain DSM 14266 / JCM 13030 / NBRC 101832 / S2 / LL) protein is Translation initiation factor 1A.